The following is a 375-amino-acid chain: tRNA-specific 2-thiouridylase MnmA (375 aa).

Residues 17–24 (GMSGGVDS) and methionine 43 each bind ATP. Residues 103 to 105 (NPD) form an interaction with target base in tRNA region. Cysteine 108 (nucleophile) is an active-site residue. Cysteines 108 and 204 form a disulfide. Glycine 132 contributes to the ATP binding site. The segment at 154-156 (KDQ) is interaction with tRNA. The active-site Cysteine persulfide intermediate is the cysteine 204. The interval 316-317 (RY) is interaction with tRNA.

The protein belongs to the MnmA/TRMU family.

Its subcellular location is the cytoplasm. It catalyses the reaction S-sulfanyl-L-cysteinyl-[protein] + uridine(34) in tRNA + AH2 + ATP = 2-thiouridine(34) in tRNA + L-cysteinyl-[protein] + A + AMP + diphosphate + H(+). Functionally, catalyzes the 2-thiolation of uridine at the wobble position (U34) of tRNA, leading to the formation of s(2)U34. The protein is tRNA-specific 2-thiouridylase MnmA of Stutzerimonas stutzeri (strain A1501) (Pseudomonas stutzeri).